Reading from the N-terminus, the 284-residue chain is D-tagatose-1,6-bisphosphate aldolase subunit GatY (284 aa).

The Proton donor role is filled by Asp82. The Zn(2+) site is built by His83 and His180. A dihydroxyacetone phosphate-binding site is contributed by Gly181. Residue His208 participates in Zn(2+) binding. Residues 209-211 (GAS) and 230-233 (NVAT) each bind dihydroxyacetone phosphate.

It belongs to the class II fructose-bisphosphate aldolase family. TagBP aldolase GatY subfamily. Forms a complex with GatZ. Zn(2+) is required as a cofactor.

The enzyme catalyses D-tagatofuranose 1,6-bisphosphate = D-glyceraldehyde 3-phosphate + dihydroxyacetone phosphate. Its pathway is carbohydrate metabolism; D-tagatose 6-phosphate degradation; D-glyceraldehyde 3-phosphate and glycerone phosphate from D-tagatose 6-phosphate: step 2/2. Its function is as follows. Catalytic subunit of the tagatose-1,6-bisphosphate aldolase GatYZ, which catalyzes the reversible aldol condensation of dihydroxyacetone phosphate (DHAP or glycerone-phosphate) with glyceraldehyde 3-phosphate (G3P) to produce tagatose 1,6-bisphosphate (TBP). Requires GatZ subunit for full activity and stability. Is involved in the catabolism of galactitol. The sequence is that of D-tagatose-1,6-bisphosphate aldolase subunit GatY from Escherichia coli (strain K12 / MC4100 / BW2952).